A 622-amino-acid polypeptide reads, in one-letter code: WD repeat-containing protein 70 (622 aa).

Basic and acidic residues predominate over residues 36 to 55 (RTAVERSKQTLEAREKEEQL). Residues 36-141 (RTAVERSKQT…DNPVKDIPDS (106 aa)) form a disordered region. Residues 67–84 (SSSGQKKTKASGSSSGSE) show a composition bias toward low complexity. A compositionally biased stretch (acidic residues) spans 120–132 (SDDEDDEEHEDDD). 7 WD repeats span residues 148–187 (HGTKTVSALGLDPSGARLVTGGYDYDVRFWDFAGMDASLQ), 195–236 (CECH…ECVK), 249–289 (GHTA…KHKG), 298–337 (GKPVIPTCCTYSRDGKFIAAGCQDGSIQIWDRNMSVHTKF), 344–383 (TPGTDTSCVTFSYGGNVLATRGGDDTLKTWDIRKFKNPLN), 387–434 (GLEN…KIYE), and 437–476 (VTEASVVRCLWHPKLNQIMVGTGNGLAKVYYDPNRSQRGA). Residues 508–533 (REPRQRSTRKQLEKDRLDPVKSHKPE) show a composition bias toward basic and acidic residues. Disordered stretches follow at residues 508–549 (REPR…GTHG) and 602–622 (AEVDSDEEEPDNEPEWKKRKI). The span at 539 to 549 (PGRGGRVGTHG) shows a compositional bias: gly residues. Acidic residues predominate over residues 604–614 (VDSDEEEPDNE).

Belongs to the WD repeat GAD-1 family.

This chain is WD repeat-containing protein 70 (wdr70), found in Xenopus laevis (African clawed frog).